The primary structure comprises 141 residues: Hemoglobin subunit alpha (141 aa).

Positions 1 to 141 (VLSPADKTNV…VSTVLTSKYR (141 aa)) constitute a Globin domain. Position 3 is a phosphoserine (Ser-3). The residue at position 7 (Lys-7) is an N6-succinyllysine. Thr-8 is subject to Phosphothreonine. At Lys-11 the chain carries N6-succinyllysine. Lys-16 carries the N6-acetyllysine; alternate modification. Lys-16 is modified (N6-succinyllysine; alternate). Position 24 is a phosphotyrosine (Tyr-24). Ser-35 is modified (phosphoserine). Lys-40 carries the N6-succinyllysine modification. Residue Ser-49 is modified to Phosphoserine. His-58 is a binding site for O2. A heme b-binding site is contributed by His-87. The residue at position 102 (Ser-102) is a Phosphoserine. Thr-108 is modified (phosphothreonine). Ser-124 is subject to Phosphoserine. Phosphothreonine occurs at positions 134 and 137. Phosphoserine is present on Ser-138.

It belongs to the globin family. In terms of assembly, heterotetramer of two alpha chains and two beta chains. In terms of tissue distribution, red blood cells.

In terms of biological role, involved in oxygen transport from the lung to the various peripheral tissues. Hemopressin acts as an antagonist peptide of the cannabinoid receptor CNR1. Hemopressin-binding efficiently blocks cannabinoid receptor CNR1 and subsequent signaling. The polypeptide is Hemoglobin subunit alpha (HBA) (Lutra lutra (European river otter)).